A 238-amino-acid polypeptide reads, in one-letter code: Modulator of macroautophagy TMEM150B (238 aa).

Over Met1–Leu8 the chain is Cytoplasmic. The chain crosses the membrane as a helical span at residues Pro9–Val29. N-linked (GlcNAc...) asparagine glycosylation occurs at Asn30. At Asn30–Gln51 the chain is on the extracellular side. The chain crosses the membrane as a helical span at residues Ser52–Val72. Residues Arg73–Gln86 are Cytoplasmic-facing. The helical transmembrane segment at Asn87–Phe107 threads the bilayer. The Extracellular segment spans residues Gln108–His116. A helical transmembrane segment spans residues Leu117–Leu137. At Ser138 to Arg156 the chain is on the cytoplasmic side. A helical membrane pass occupies residues Leu157–His177. At Met178–Glu186 the chain is on the extracellular side. The chain crosses the membrane as a helical span at residues Trp187–Leu207. Residues Arg208–Leu238 lie on the Cytoplasmic side of the membrane.

It belongs to the DRAM/TMEM150 family.

It is found in the cell membrane. It localises to the endosome membrane. Its subcellular location is the cytoplasmic vesicle. The protein resides in the autophagosome membrane. Modulator of macroautophagy that causes accumulation of autophagosomes under basal conditions and enhances autophagic flux. Represses cell death and promotes long-term clonogenic survival of cells grown in the absence of glucose in a macroautophagy-independent manner. May have some role in extracellular matrix engulfment or growth factor receptor recycling, both of which can modulate cell survival. In Mus musculus (Mouse), this protein is Modulator of macroautophagy TMEM150B.